The sequence spans 349 residues: C-X-C chemokine receptor type 1 (349 aa).

Residues 1–44 (MAEAEYFIWIAPEGDFEEEFGNITRMLPTGEYFSPCKRVPMTNR) are Extracellular-facing. A glycan (N-linked (GlcNAc...) asparagine) is linked at Asn-22. A helical membrane pass occupies residues 45–71 (QAVVVFYALVFLLSLLGNSLVMLVILY). At 72 to 80 (RRRTRSVTD) the chain is on the cytoplasmic side. Residues 81-101 (VYVLNLAIADLLFSLTLPFLA) form a helical membrane-spanning segment. The Extracellular segment spans residues 102–116 (VSKWKGWIFGTPLCK). A disulfide bridge links Cys-115 with Cys-192. A helical membrane pass occupies residues 117–138 (MVSLLKEVNFFSGILLLACISV). The Cytoplasmic segment spans residues 139-159 (DRYLAIVHATRTLTRKRYLVK). Residues 160–179 (FVCMGTWGLSLVLSLPFAIF) form a helical membrane-spanning segment. The Extracellular portion of the chain corresponds to 180–204 (RQAYKPYRSGTVCYEVLGEATADLR). Residues 205–225 (ITLRGLSHIFGFLLPLFIMLV) traverse the membrane as a helical segment. Residues 226 to 247 (CYGLTLRTLFKAHMRQKRRAMW) lie on the Cytoplasmic side of the membrane. A helical transmembrane segment spans residues 248–269 (VIFAVVLVFLLCCLPYNLVLLS). Residues 270–290 (DTLLGAHLIQDTCERRNNIDQ) are Extracellular-facing. A helical transmembrane segment spans residues 291–313 (ALYITEILGFSHSCLNPVIYAFV). The Cytoplasmic segment spans residues 314–349 (GQSFRHEFLKILANLVHKEVLTHHSASFRTSLTTIY).

This sequence belongs to the G-protein coupled receptor 1 family. In terms of assembly, interacts with IL8. Interacts with GNAI2.

It localises to the cell membrane. In terms of biological role, receptor to interleukin-8, which is a powerful neutrophils chemotactic factor. Binding of IL-8 to the receptor causes activation of neutrophils. This response is mediated via a G-protein that activates a phosphatidylinositol-calcium second messenger system. This chain is C-X-C chemokine receptor type 1 (Cxcr1), found in Rattus norvegicus (Rat).